The following is a 102-amino-acid chain: Protein transport protein sec61 subunit beta (102 aa).

The span at 1-15 shows a compositional bias: polar residues; it reads MSSTKASGSVKNSAA. The disordered stretch occupies residues 1–53; the sequence is MSSTKASGSVKNSAASAPGGPKSQIRRRAAVEKNTKESNSGPAGARAAGAPGS. Over 1 to 72 the chain is Cytoplasmic; it reads MSSTKASGSV…DEASGFKVDP (72 aa). Over residues 41 to 52 the composition is skewed to low complexity; sequence GPAGARAAGAPG. A helical membrane pass occupies residues 73 to 93; sequence VVVMVLSVGFIASVFLLHIVA.

It belongs to the SEC61-beta family. As to quaternary structure, heterotrimeric complex composed of SEC61, SBH1 and SSS1.

Its subcellular location is the endoplasmic reticulum membrane. Necessary for protein translocation in the endoplasmic reticulum. In Schizosaccharomyces pombe (strain 972 / ATCC 24843) (Fission yeast), this protein is Protein transport protein sec61 subunit beta (sbh1).